The chain runs to 505 residues: Glycerol kinase (505 aa).

Residue T12 participates in ADP binding. 3 residues coordinate ATP: T12, T13, and S14. Sn-glycerol 3-phosphate is bound at residue T12. R16 serves as a coordination point for ADP. Sn-glycerol 3-phosphate is bound by residues R82, E83, Y134, and D246. Glycerol-binding residues include R82, E83, Y134, D246, and Q247. 2 residues coordinate ADP: T268 and G312. 4 residues coordinate ATP: T268, G312, Q316, and G413. Positions 413 and 417 each coordinate ADP.

It belongs to the FGGY kinase family.

The catalysed reaction is glycerol + ATP = sn-glycerol 3-phosphate + ADP + H(+). Its pathway is polyol metabolism; glycerol degradation via glycerol kinase pathway; sn-glycerol 3-phosphate from glycerol: step 1/1. Its activity is regulated as follows. Inhibited by fructose 1,6-bisphosphate (FBP). Its function is as follows. Key enzyme in the regulation of glycerol uptake and metabolism. Catalyzes the phosphorylation of glycerol to yield sn-glycerol 3-phosphate. This is Glycerol kinase from Beutenbergia cavernae (strain ATCC BAA-8 / DSM 12333 / CCUG 43141 / JCM 11478 / NBRC 16432 / NCIMB 13614 / HKI 0122).